The following is a 222-amino-acid chain: Protein-L-isoaspartate O-methyltransferase (222 aa).

The active site involves Ser-67.

This sequence belongs to the methyltransferase superfamily. L-isoaspartyl/D-aspartyl protein methyltransferase family.

It is found in the cytoplasm. The enzyme catalyses [protein]-L-isoaspartate + S-adenosyl-L-methionine = [protein]-L-isoaspartate alpha-methyl ester + S-adenosyl-L-homocysteine. Its function is as follows. Catalyzes the methyl esterification of L-isoaspartyl residues in peptides and proteins that result from spontaneous decomposition of normal L-aspartyl and L-asparaginyl residues. It plays a role in the repair and/or degradation of damaged proteins. In Parvibaculum lavamentivorans (strain DS-1 / DSM 13023 / NCIMB 13966), this protein is Protein-L-isoaspartate O-methyltransferase.